The following is a 94-amino-acid chain: uncharacterized protein (94 aa).

This is an uncharacterized protein from Helicobacter pylori (strain ATCC 700392 / 26695) (Campylobacter pylori).